We begin with the raw amino-acid sequence, 197 residues long: Holliday junction branch migration complex subunit RuvA (197 aa).

Residues 1-63 form a domain I region; it reads MFEYLNGKLV…EDAHSLYGFV (63 aa). Positions 64–142 are domain II; that stretch reads NESEKALFLR…ATGAVGISLL (79 aa). The tract at residues 142 to 146 is flexible linker; the sequence is LDAAP. The domain III stretch occupies residues 147–197; sequence ASNLALEEAIEALQALGYKATELKKIEKKLAQEAGLTSEEYIKSALKLMMK.

This sequence belongs to the RuvA family. Homotetramer. Forms an RuvA(8)-RuvB(12)-Holliday junction (HJ) complex. HJ DNA is sandwiched between 2 RuvA tetramers; dsDNA enters through RuvA and exits via RuvB. An RuvB hexamer assembles on each DNA strand where it exits the tetramer. Each RuvB hexamer is contacted by two RuvA subunits (via domain III) on 2 adjacent RuvB subunits; this complex drives branch migration. In the full resolvosome a probable DNA-RuvA(4)-RuvB(12)-RuvC(2) complex forms which resolves the HJ.

The protein resides in the cytoplasm. Its function is as follows. The RuvA-RuvB-RuvC complex processes Holliday junction (HJ) DNA during genetic recombination and DNA repair, while the RuvA-RuvB complex plays an important role in the rescue of blocked DNA replication forks via replication fork reversal (RFR). RuvA specifically binds to HJ cruciform DNA, conferring on it an open structure. The RuvB hexamer acts as an ATP-dependent pump, pulling dsDNA into and through the RuvAB complex. HJ branch migration allows RuvC to scan DNA until it finds its consensus sequence, where it cleaves and resolves the cruciform DNA. In Lactococcus lactis subsp. cremoris (strain MG1363), this protein is Holliday junction branch migration complex subunit RuvA.